The chain runs to 466 residues: Protein hob1 (466 aa).

In terms of domain architecture, BAR spans 17-269 (LRSKFNVGEI…RGDVKDRAEA (253 aa)). Coiled-coil stretches lie at residues 31 to 67 (IYED…LNHQ) and 177 to 204 (EKKL…LKEE). Positions 280–342 (PTYKRPGMGP…ASDYSTPSAG (63 aa)) are disordered. Residues 294–303 (ATASSSSSFS) are compositionally biased toward low complexity. A phosphoserine mark is found at Ser-298, Ser-299, Ser-301, and Ser-303. The SH3 domain maps to 407 to 466 (PAAEHVVALYDYAAQAAGDLSFHAGDRIEVVSRTDNQNEWWIGRLNGAQGQFPGNYVQLE).

Its function is as follows. Has a role in DNA damage signaling as a part of stress response processes. This is Protein hob1 (hob1) from Schizosaccharomyces pombe (strain 972 / ATCC 24843) (Fission yeast).